A 520-amino-acid polypeptide reads, in one-letter code: Lysine--tRNA ligase (520 aa).

Residues 1–21 (MSDHLIPSIPTPAAAPAAAPA) are disordered. Positions 12–21 (PAAAPAAAPA) are enriched in low complexity. Residues glutamate 430 and glutamate 437 each coordinate Mg(2+).

The protein belongs to the class-II aminoacyl-tRNA synthetase family. As to quaternary structure, homodimer. The cofactor is Mg(2+).

The protein resides in the cytoplasm. The enzyme catalyses tRNA(Lys) + L-lysine + ATP = L-lysyl-tRNA(Lys) + AMP + diphosphate. This chain is Lysine--tRNA ligase, found in Variovorax paradoxus (strain S110).